A 788-amino-acid polypeptide reads, in one-letter code: Putative wall-associated receptor kinase-like 11 (788 aa).

An N-terminal signal peptide occupies residues 1-27; it reads MRCDNNYSFSILFSLLLILILDSKVVS. Residues 28–375 lie on the Extracellular side of the membrane; sequence LSTSCQSKSV…TFNCIGNKTR (348 aa). Asn65, Asn80, Asn121, Asn159, Asn233, Asn253, Asn278, Asn295, and Asn310 each carry an N-linked (GlcNAc...) asparagine glycan. The atypical EGF-like stretch occupies residues 306–369; the sequence is CICNNVTISG…CVNLPGTFNC (64 aa). 3 disulfide bridges follow: Cys308-Cys321, Cys343-Cys360, and Cys354-Cys369. N-linked (GlcNAc...) asparagine glycosylation is present at Asn372. Residues 376–396 traverse the membrane as a helical segment; it reads VTMIGVGSAFGILVLVVGIWW. Over 397–788 the chain is Cytoplasmic; sequence LRKFLKKRRM…QPLFPHPTWI (392 aa). A Protein kinase domain is found at 451-726; sequence FSESRILGQG…KVFTDLEKIL (276 aa). ATP-binding positions include 457-465 and Lys479; that span reads LGQGGQGTV. Position 524 is a phosphotyrosine (Tyr524). The Proton acceptor role is filled by Asp576. Thr610 and Thr615 each carry phosphothreonine. Residue Tyr623 is modified to Phosphotyrosine.

This sequence belongs to the protein kinase superfamily. Ser/Thr protein kinase family.

Its subcellular location is the membrane. It carries out the reaction L-seryl-[protein] + ATP = O-phospho-L-seryl-[protein] + ADP + H(+). It catalyses the reaction L-threonyl-[protein] + ATP = O-phospho-L-threonyl-[protein] + ADP + H(+). Its function is as follows. Putative serine/threonine-protein kinase that may function as a signaling receptor of extracellular matrix component. This chain is Putative wall-associated receptor kinase-like 11 (WAKL11), found in Arabidopsis thaliana (Mouse-ear cress).